The sequence spans 263 residues: Diphthine synthase (263 aa).

S-adenosyl-L-methionine is bound by residues Leu-9, Asp-84, Met-87, 112 to 113, Leu-164, Ala-207, and His-232; that span reads SI.

Belongs to the diphthine synthase family. As to quaternary structure, homodimer.

The enzyme catalyses 2-[(3S)-amino-3-carboxypropyl]-L-histidyl-[translation elongation factor 2] + 3 S-adenosyl-L-methionine = diphthine-[translation elongation factor 2] + 3 S-adenosyl-L-homocysteine + 3 H(+). It functions in the pathway protein modification; peptidyl-diphthamide biosynthesis. In terms of biological role, S-adenosyl-L-methionine-dependent methyltransferase that catalyzes the trimethylation of the amino group of the modified target histidine residue in translation elongation factor 2 (EF-2), to form an intermediate called diphthine. The three successive methylation reactions represent the second step of diphthamide biosynthesis. The sequence is that of Diphthine synthase from Methanosphaera stadtmanae (strain ATCC 43021 / DSM 3091 / JCM 11832 / MCB-3).